We begin with the raw amino-acid sequence, 190 residues long: Vacuolar protein sorting-associated protein 29 (190 aa).

The protein belongs to the VPS29 family. Component of the retromer complex which consists of VPS29 (MAG1), VPS26 (VPS26A or VPS26B), VPS35 (VPS35A or VPS35B or VPS35C), VPS5/17 (SNX1 or SNX2A or SNX2B). Component of a retromer subcomplex consisting of VPS29 (MAG1), VPS26 (VPS26A or VPS26B), VPS35 (VPS35A or VPS35B or VPS35C).

Its subcellular location is the cytoplasm. The protein resides in the endosome membrane. It is found in the prevacuolar compartment membrane. The protein localises to the golgi apparatus. It localises to the trans-Golgi network membrane. Its subcellular location is the late endosome membrane. Functionally, plays a role in vesicular protein sorting. Component of the membrane-associated retromer complex which is essential in endosome-to-Golgi retrograde transport. Required for the auxin-carrier protein PIN2 sorting to the lytic vacuolar pathway and the PIN1 recycling to the plasma membrane, thus influencing auxin transport orientation. Also involved in the efficient sorting of seed storage proteins globulin 12S and albumin 2S. The VPS29-VPS26-VPS35 subcomplex may be involved in recycling of specific cargos from endosome to the plasma membrane. This chain is Vacuolar protein sorting-associated protein 29, found in Arabidopsis thaliana (Mouse-ear cress).